The primary structure comprises 90 residues: Small ribosomal subunit protein bS16 (90 aa).

The protein belongs to the bacterial ribosomal protein bS16 family.

This is Small ribosomal subunit protein bS16 from Clostridioides difficile (strain 630) (Peptoclostridium difficile).